A 484-amino-acid polypeptide reads, in one-letter code: Glutamate--tRNA ligase (484 aa).

A 'HIGH' region motif is present at residues 11–21 (PSPTGYPHLGN). Residues cysteine 108, cysteine 110, cysteine 135, and aspartate 137 each coordinate Zn(2+). Positions 245-249 (KLSKR) match the 'KMSKS' region motif. Lysine 248 provides a ligand contact to ATP.

It belongs to the class-I aminoacyl-tRNA synthetase family. Glutamate--tRNA ligase type 1 subfamily. As to quaternary structure, monomer. The cofactor is Zn(2+).

Its subcellular location is the cytoplasm. It catalyses the reaction tRNA(Glu) + L-glutamate + ATP = L-glutamyl-tRNA(Glu) + AMP + diphosphate. Functionally, catalyzes the attachment of glutamate to tRNA(Glu) in a two-step reaction: glutamate is first activated by ATP to form Glu-AMP and then transferred to the acceptor end of tRNA(Glu). The polypeptide is Glutamate--tRNA ligase (Dehalococcoides mccartyi (strain ATCC BAA-2266 / KCTC 15142 / 195) (Dehalococcoides ethenogenes (strain 195))).